The following is a 185-amino-acid chain: Large ribosomal subunit protein bL25 (185 aa).

The protein belongs to the bacterial ribosomal protein bL25 family. CTC subfamily. Part of the 50S ribosomal subunit; part of the 5S rRNA/L5/L18/L25 subcomplex. Contacts the 5S rRNA. Binds to the 5S rRNA independently of L5 and L18.

Functionally, this is one of the proteins that binds to the 5S RNA in the ribosome where it forms part of the central protuberance. The sequence is that of Large ribosomal subunit protein bL25 from Chlamydia caviae (strain ATCC VR-813 / DSM 19441 / 03DC25 / GPIC) (Chlamydophila caviae).